The primary structure comprises 257 residues: Transmembrane protein 101 (257 aa).

Transmembrane regions (helical) follow at residues 21-40, 52-72, 77-97, 110-130, 139-159, 182-202, 206-226, and 233-253; these read VLLT…LYAE, VPYL…MSFG, WFAL…YIGG, YSRT…AGEL, SLQS…AYSL, LFFV…YVTL, ILAV…AYWH, and FWNQ…AVIL.

Its subcellular location is the membrane. Functionally, may activate NF-kappa-B signaling pathways. In Homo sapiens (Human), this protein is Transmembrane protein 101 (TMEM101).